We begin with the raw amino-acid sequence, 355 residues long: Small ribosomal subunit protein uS2 (355 aa).

The protein belongs to the universal ribosomal protein uS2 family.

The chain is Small ribosomal subunit protein uS2 from Methylorubrum extorquens (strain CM4 / NCIMB 13688) (Methylobacterium extorquens).